We begin with the raw amino-acid sequence, 59 residues long: Lantibiotic lacticin 3147 A1 (59 aa).

The propeptide occupies 1 to 29; sequence MNKNEIETQPVTWLEEVSDQNFDEDVFGA. The segment at residues 30–31 is a cross-link (lanthionine (Cys-Ser)); it reads CS. A 2,3-didehydrobutyrine mark is found at threonine 32 and threonine 34. Serine 36 is modified (2,3-didehydroalanine (Ser)). The lanthionine (Ser-Cys) cross-link spans 38 to 48; the sequence is SDYWGNNGAWC. Cross-links (beta-methyllanthionine (Thr-Cys)) lie at residues 49–54 and 51–58; these read TLTHEC and THECMAWC.

In terms of processing, maturation of lantibiotics involves the enzymatic conversion of Thr, and Ser into dehydrated AA and the formation of thioether bonds with cysteine. This is followed by membrane translocation and cleavage of the modified precursor. It is not established whether the 2,3-didehydrobutyrines are the E- or Z-isomers. In the NMR model they were assumed to be the Z-isomer.

Its subcellular location is the secreted. Lanthionine-containing peptide antibiotic (lantibiotic) active on Gram-positive bacteria. The bactericidal activity of lantibiotics is based on depolarization of energized bacterial cytoplasmic membranes, initiated by the formation of aqueous transmembrane pores. When present individually lacticin 3147 A1 exhibits strong activity towards L.lactis strain AM2, weak activity towards L.lactis strain HP and no activity towards L.lactis strain IFPL359, but when combined with lacticin 3147 A2 it displays strong activity towards all three strains. This is Lantibiotic lacticin 3147 A1 from Lactococcus lactis subsp. lactis (Streptococcus lactis).